The sequence spans 387 residues: Tetratricopeptide repeat protein 4 (387 aa).

N-acetylmethionine is present on methionine 1. Phosphoserine is present on residues serine 47 and serine 51. TPR repeat units lie at residues alanine 79–aspartate 112, alanine 117–histidine 150, and leucine 151–glutamate 184. Position 243 is a phosphoserine (serine 243).

Belongs to the TTC4 family. In terms of assembly, interacts (via TPR repeats) with HSP90AB1. Interacts with HSPA8 and CDC6. Interacts with TBK1. Interacts with MSL1. Highly expressed in proliferating tissue and tumor cell lines but not in normal cell lines.

The protein resides in the nucleus. It localises to the nucleoplasm. The protein localises to the cytoplasm. In terms of biological role, may act as a co-chaperone for HSP90AB1. Promotes Sendai virus (SeV)-induced host cell innate immune responses. This chain is Tetratricopeptide repeat protein 4 (TTC4), found in Homo sapiens (Human).